The chain runs to 84 residues: Large ribosomal subunit protein bL31B (84 aa).

The protein belongs to the bacterial ribosomal protein bL31 family. Type B subfamily. As to quaternary structure, part of the 50S ribosomal subunit.

The sequence is that of Large ribosomal subunit protein bL31B from Phocaeicola vulgatus (strain ATCC 8482 / DSM 1447 / JCM 5826 / CCUG 4940 / NBRC 14291 / NCTC 11154) (Bacteroides vulgatus).